Here is a 124-residue protein sequence, read N- to C-terminus: UPF0225 protein SCO1677 (124 aa).

Belongs to the UPF0225 family.

This Streptomyces coelicolor (strain ATCC BAA-471 / A3(2) / M145) protein is UPF0225 protein SCO1677.